The chain runs to 289 residues: Shikimate kinase (289 aa).

84-94 (PVASGLSSSSA) provides a ligand contact to ATP.

This sequence belongs to the GHMP kinase family. Archaeal shikimate kinase subfamily.

It is found in the cytoplasm. The catalysed reaction is shikimate + ATP = 3-phosphoshikimate + ADP + H(+). It functions in the pathway metabolic intermediate biosynthesis; chorismate biosynthesis; chorismate from D-erythrose 4-phosphate and phosphoenolpyruvate: step 5/7. This chain is Shikimate kinase (aroK), found in Methanothermobacter thermautotrophicus (strain ATCC 29096 / DSM 1053 / JCM 10044 / NBRC 100330 / Delta H) (Methanobacterium thermoautotrophicum).